Here is a 77-residue protein sequence, read N- to C-terminus: Translation initiation factor IF-1, chloroplastic (77 aa).

An S1-like domain is found at 1-71; sequence MKRQKWIHEG…TRGRIIYRLR (71 aa).

Belongs to the IF-1 family. In terms of assembly, component of the 30S ribosomal translation pre-initiation complex which assembles on the 30S ribosome in the order IF-2 and IF-3, IF-1 and N-formylmethionyl-tRNA(fMet); mRNA recruitment can occur at any time during PIC assembly.

It is found in the plastid. Its subcellular location is the chloroplast. Its function is as follows. One of the essential components for the initiation of protein synthesis. Stabilizes the binding of IF-2 and IF-3 on the 30S subunit to which N-formylmethionyl-tRNA(fMet) subsequently binds. Helps modulate mRNA selection, yielding the 30S pre-initiation complex (PIC). Upon addition of the 50S ribosomal subunit IF-1, IF-2 and IF-3 are released leaving the mature 70S translation initiation complex. The chain is Translation initiation factor IF-1, chloroplastic from Leucophyllum frutescens (Texas ranger).